Here is a 90-residue protein sequence, read N- to C-terminus: MTGVPTPILIIPIHEIKSFQNRLDIRDAARWIALATVLERAQFFLKNFTIFELFPGLPARHRRKHKLIFPLRSRAWLLWGSSRKVPLRFK.

This is an uncharacterized protein from Treponema pallidum (strain Nichols).